Here is a 72-residue protein sequence, read N- to C-terminus: Translation initiation factor IF-1 (72 aa).

The S1-like domain occupies 1–72 (MAKEESIEVE…SKGRITYRYK (72 aa)).

This sequence belongs to the IF-1 family. In terms of assembly, component of the 30S ribosomal translation pre-initiation complex which assembles on the 30S ribosome in the order IF-2 and IF-3, IF-1 and N-formylmethionyl-tRNA(fMet); mRNA recruitment can occur at any time during PIC assembly.

It is found in the cytoplasm. One of the essential components for the initiation of protein synthesis. Stabilizes the binding of IF-2 and IF-3 on the 30S subunit to which N-formylmethionyl-tRNA(fMet) subsequently binds. Helps modulate mRNA selection, yielding the 30S pre-initiation complex (PIC). Upon addition of the 50S ribosomal subunit IF-1, IF-2 and IF-3 are released leaving the mature 70S translation initiation complex. This chain is Translation initiation factor IF-1, found in Chlorobaculum tepidum (strain ATCC 49652 / DSM 12025 / NBRC 103806 / TLS) (Chlorobium tepidum).